The primary structure comprises 342 residues: 4-hydroxy-2-oxovalerate aldolase (342 aa).

Residues 7–259 (ILVHDMSLRD…CTGVDLGRIQ (253 aa)) enclose the Pyruvate carboxyltransferase domain. 15 to 16 (RD) lines the substrate pocket. A Mn(2+)-binding site is contributed by Asp-16. The active-site Proton acceptor is His-19. The substrate site is built by Ser-169 and His-198. Mn(2+)-binding residues include His-198 and His-200. Substrate is bound at residue Tyr-289.

The protein belongs to the 4-hydroxy-2-oxovalerate aldolase family.

The enzyme catalyses (S)-4-hydroxy-2-oxopentanoate = acetaldehyde + pyruvate. The sequence is that of 4-hydroxy-2-oxovalerate aldolase from Alkalilimnicola ehrlichii (strain ATCC BAA-1101 / DSM 17681 / MLHE-1).